The chain runs to 345 residues: Baculoviral IAP repeat-containing protein 7-B (345 aa).

2 BIR repeats span residues 46–112 and 154–219; these read RQRS…PFLQ and RLGS…DFLL. Zn(2+)-binding residues include C188, C191, H208, and C215. At S237 the chain carries Phosphoserine. S241 carries the post-translational modification Phosphoserine; by MAPK1. Phosphoserine is present on S253. S257 is subject to Phosphoserine; by MAPK1. Residues 258–286 are disordered; the sequence is TESVSVPRAPTPGERSEPPKVSGPPLSTE. The RING-type zinc-finger motif lies at 298 to 333; that stretch reads CKVCMDKDVSMLFVPCGHLVVCTECAPNLRHCPICR.

The protein belongs to the IAP family. In terms of processing, auto-ubiquitinated, and degraded in a 2-step mechanism; a caspase-independent first step and a caspase-dependent second step. Post-translationally, phosphorylated via MAPK-dependent and CDK-dependent pathways during oocyte maturation. Phosphorylation does not appear to affect caspase inhibition or autoubiquitination activity.

It localises to the cytoplasm. The catalysed reaction is S-ubiquitinyl-[E2 ubiquitin-conjugating enzyme]-L-cysteine + [acceptor protein]-L-lysine = [E2 ubiquitin-conjugating enzyme]-L-cysteine + N(6)-ubiquitinyl-[acceptor protein]-L-lysine.. Its function is as follows. Weak apoptotic suppressor. Has E3 ubiquitin-protein ligase activity. Weak inhibitor of caspase activity. The polypeptide is Baculoviral IAP repeat-containing protein 7-B (birc7-b) (Xenopus laevis (African clawed frog)).